The primary structure comprises 1049 residues: Probable disease resistance protein RF9 (1049 aa).

Positions 25-41 (QGVEDQVTELKRDLNLL) form a coiled coil. Residues 139–158 (GYKQPQGDKQREMRPRFSKD) are disordered. A compositionally biased stretch (basic and acidic residues) spans 144–158 (QGDKQREMRPRFSKD). The NB-ARC domain maps to 147 to 460 (KQREMRPRFS…AEGIFQPRHY (314 aa)). 190 to 197 (GMGGLGKT) contributes to the ATP binding site. 10 LRR repeats span residues 584–608 (LELL…SIGQ), 609–634 (LIHL…NLKL), 657–682 (MQQL…NLVK), 683–707 (LETL…RLRT), 776–799 (PSHL…ILEK), 800–827 (LHQL…GFPQ), 849–873 (MPVL…HLPS), 896–923 (LVHL…GFPQ), 945–968 (MPQL…GFPQ), and 990–1015 (MPLL…RFIY).

The protein belongs to the disease resistance NB-LRR family.

In terms of biological role, potential disease resistance protein. This chain is Probable disease resistance protein RF9 (RF9), found in Arabidopsis thaliana (Mouse-ear cress).